The sequence spans 188 residues: GMP synthase [glutamine-hydrolyzing] subunit A (188 aa).

One can recognise a Glutamine amidotransferase type-1 domain in the interval 1 to 188 (MIVIMDNGGQ…RNFAKLCGEL (188 aa)). Cysteine 78 functions as the Nucleophile in the catalytic mechanism. Catalysis depends on residues histidine 165 and glutamate 167.

In terms of assembly, heterodimer composed of a glutamine amidotransferase subunit (A) and a GMP-binding subunit (B).

It catalyses the reaction XMP + L-glutamine + ATP + H2O = GMP + L-glutamate + AMP + diphosphate + 2 H(+). It participates in purine metabolism; GMP biosynthesis; GMP from XMP (L-Gln route): step 1/1. Functionally, catalyzes the synthesis of GMP from XMP. The sequence is that of GMP synthase [glutamine-hydrolyzing] subunit A from Pyrococcus abyssi (strain GE5 / Orsay).